We begin with the raw amino-acid sequence, 93 residues long: Small ribosomal subunit protein bS20 (93 aa).

The span at 1–11 shows a compositional bias: basic and acidic residues; sequence MPQHKSAEKRV. Positions 1-23 are disordered; it reads MPQHKSAEKRVRQSKRRNARNRV. Over residues 12–23 the composition is skewed to basic residues; it reads RQSKRRNARNRV.

This sequence belongs to the bacterial ribosomal protein bS20 family.

Binds directly to 16S ribosomal RNA. This Chloroherpeton thalassium (strain ATCC 35110 / GB-78) protein is Small ribosomal subunit protein bS20.